The primary structure comprises 563 residues: MHNSSELIAVINGFRNSGRFCDINIVINDERINAHRLMLSGASEYFSILFSSDFIDSNDYEVNLSHLDYQSVNDLIDYIYGIPLSLTNDNVKYILSTADFLQIGSAITECEKYILKNLCSRNCIDFYIYADKYNNKKIESASFNTILRNILRLINDENFKYLTEESMIKILSDDMLNIKNEDFAPLILIKWLESTQQPCTVELLRCLRISLLSPQVIKSLYSHRLVSSIYECITFLNNIAFLDESFPRYHSIELISIGISNSHDKISINCYNRKKNTWEMISSRRYRCSFAVAVLDNIIYMMGGYDQSPYRSSKVIAYNTCTNSWIYDIPELKYPRSNCGGVADDEYIYCIGGIRDQDSSLISSIDRWKPSKPYWQTYAKMREPKCDMGVAMLNGLIYVIGGIVKGDTCTDALESLSEDGWMKHQRLPIKMSNMSTIVHAGKIYISGGYNNSSAVNGPSNLVLSYNPIYDEWTKLSSLNIPRINPALWSAHNKLYVGGGISNDQTTTSETYDKEKDCWTLDNGHVLPRNYIMYKCEPIKHKYPLEKIQYTNDFLKCLESFIDS.

In terms of domain architecture, BTB spans C21–N88. Positions C123–S219 constitute a BACK domain. Kelch repeat units follow at residues I252–N297, I298–E346, Y347–G395, I397–G441, K442–N492, and L494–I538.

As to quaternary structure, interacts (via BTB domain) with host CUL3.

The protein localises to the host cytoplasm. Functionally, probable substrate-specific adapter of CUL3-containing E3 ubiquitin-protein ligases which mediate the ubiquitination and subsequent proteasomal degradation of host target proteins. In Cowpox virus (strain Brighton Red) (CPV), this protein is Kelch repeat and BTB domain-containing protein 1 (KBTB1).